Here is a 104-residue protein sequence, read N- to C-terminus: Phosphoribosyl-ATP pyrophosphatase (104 aa).

This sequence belongs to the PRA-PH family.

It is found in the cytoplasm. The enzyme catalyses 1-(5-phospho-beta-D-ribosyl)-ATP + H2O = 1-(5-phospho-beta-D-ribosyl)-5'-AMP + diphosphate + H(+). The protein operates within amino-acid biosynthesis; L-histidine biosynthesis; L-histidine from 5-phospho-alpha-D-ribose 1-diphosphate: step 2/9. The protein is Phosphoribosyl-ATP pyrophosphatase of Methanocorpusculum labreanum (strain ATCC 43576 / DSM 4855 / Z).